A 317-amino-acid chain; its full sequence is D-alanine--D-alanine ligase (317 aa).

Residues 104–303 form the ATP-grasp domain; sequence KRVWLQHGLP…YAELCVAILA (200 aa). 130 to 185 is a binding site for ATP; sequence PDRLGLPLILKPPHEGSTVGITKVAACADMEQAYAAASHFDEVVLAEQFVRGRELT. Positions 257, 270, and 272 each coordinate Mg(2+).

This sequence belongs to the D-alanine--D-alanine ligase family. Mg(2+) serves as cofactor. The cofactor is Mn(2+).

It is found in the cytoplasm. The enzyme catalyses 2 D-alanine + ATP = D-alanyl-D-alanine + ADP + phosphate + H(+). Its pathway is cell wall biogenesis; peptidoglycan biosynthesis. Its function is as follows. Cell wall formation. The sequence is that of D-alanine--D-alanine ligase from Bordetella avium (strain 197N).